The sequence spans 101 residues: uncharacterized protein (101 aa).

A helical membrane pass occupies residues Phe13–Phe33.

Its subcellular location is the membrane. This is an uncharacterized protein from Schizosaccharomyces pombe (strain 972 / ATCC 24843) (Fission yeast).